A 180-amino-acid chain; its full sequence is Stathmin-3 (180 aa).

S-palmitoyl cysteine attachment occurs at residues Cys22 and Cys24. Residues 38 to 180 (GDMEVKQLDK…NKEQREEMSG (143 aa)) enclose the SLD domain. Phosphoserine occurs at positions 50, 60, 65, 68, 72, 73, and 81. Positions 59–82 (KSPSDLSPESPMLSSPPKKKDTSL) are disordered. Low complexity predominate over residues 60–74 (SPSDLSPESPMLSSP). Residues 75 to 179 (PKKKDTSLEE…RNKEQREEMS (105 aa)) are a coiled coil.

This sequence belongs to the stathmin family. In terms of assembly, interacts with STAT3. Interacts with CLU (secreted form); this interaction may act as an important modulator during neuronal differentiation. In terms of processing, N-terminal palmitoylation promotes specific anchoring to the cytosolic leaflet of Golgi membranes and subsequent vesicular trafficking along dendrites and axons. Neuronal Stathmins are substrates for palmitoyltransferases ZDHHC3, ZDHHC7 and ZDHHC15. In terms of tissue distribution, neuron specific.

The protein resides in the golgi apparatus. The protein localises to the cell projection. It localises to the growth cone. Its subcellular location is the axon. It is found in the cytoplasm. The protein resides in the cytosol. Exhibits microtubule-destabilizing activity, which is antagonized by STAT3. This is Stathmin-3 (STMN3) from Homo sapiens (Human).